The following is a 908-amino-acid chain: UPF0182 protein NT01CX_0852 (908 aa).

Helical transmembrane passes span 8–28 (IGLF…VNVI), 47–67 (FTSV…AIKT), 96–116 (IINA…SLGY), 157–177 (LLSL…FLNI), 209–229 (LAIL…IKAW), 253–273 (FYIA…FSIL), and 280–300 (IISC…VSGA).

It belongs to the UPF0182 family.

It localises to the cell membrane. The chain is UPF0182 protein NT01CX_0852 from Clostridium novyi (strain NT).